The sequence spans 201 residues: Small ribosomal subunit protein uS4 (201 aa).

Residues 91–151 (SRLDNVVYRA…EKSRSMLWFE (61 aa)) form the S4 RNA-binding domain.

It belongs to the universal ribosomal protein uS4 family. Part of the 30S ribosomal subunit. Contacts protein S5. The interaction surface between S4 and S5 is involved in control of translational fidelity.

Its function is as follows. One of the primary rRNA binding proteins, it binds directly to 16S rRNA where it nucleates assembly of the body of the 30S subunit. In terms of biological role, with S5 and S12 plays an important role in translational accuracy. The sequence is that of Small ribosomal subunit protein uS4 from Corynebacterium jeikeium (strain K411).